The sequence spans 771 residues: Probable dipeptidyl peptidase 4 (771 aa).

An N-terminal signal peptide occupies residues 1–16 (MKYSKLLLLLVSVVQA). Residues asparagine 37, asparagine 80, asparagine 114, asparagine 173, asparagine 222, asparagine 470, and asparagine 495 are each glycosylated (N-linked (GlcNAc...) asparagine). Catalysis depends on charge relay system residues serine 618, aspartate 695, and histidine 730.

This sequence belongs to the peptidase S9B family.

The protein resides in the secreted. The enzyme catalyses Release of an N-terminal dipeptide, Xaa-Yaa-|-Zaa-, from a polypeptide, preferentially when Yaa is Pro, provided Zaa is neither Pro nor hydroxyproline.. Its function is as follows. Extracellular dipeptidyl-peptidase which removes N-terminal dipeptides sequentially from polypeptides having unsubstituted N-termini provided that the penultimate residue is proline. This chain is Probable dipeptidyl peptidase 4 (dpp4), found in Aspergillus flavus (strain ATCC 200026 / FGSC A1120 / IAM 13836 / NRRL 3357 / JCM 12722 / SRRC 167).